The sequence spans 432 residues: Amino-acid acetyltransferase (432 aa).

The region spanning 286–425 (EQLREAGIED…ASLYNFQRNS (140 aa)) is the N-acetyltransferase domain.

This sequence belongs to the acetyltransferase family. ArgA subfamily.

It localises to the cytoplasm. It carries out the reaction L-glutamate + acetyl-CoA = N-acetyl-L-glutamate + CoA + H(+). The protein operates within amino-acid biosynthesis; L-arginine biosynthesis; N(2)-acetyl-L-ornithine from L-glutamate: step 1/4. The sequence is that of Amino-acid acetyltransferase from Pseudomonas paraeruginosa (strain DSM 24068 / PA7) (Pseudomonas aeruginosa (strain PA7)).